A 228-amino-acid chain; its full sequence is MITQKEKEHLAKDKQNIYLRIISGIVLVSLFVVAILWFKTLFYILMILVGLGMLSEWCNMTSSSIHYLLIGFIIIPIPISLLIFLSTQESNRLVIMLYFCIIWSVDTFAMIGGKTFKGTKLAPKISPKKTWTGLIIGTISAGLIAVLVSLIPYYHIENYYFSNKIYLFIISCILALIAQSSDLFISYFKRKFNIKDSGHIIPGHGGVLDRFDSIILTAPVFFGINIYL.

The next 6 helical transmembrane spans lie at 31–51, 65–85, 93–113, 131–151, 165–185, and 206–226; these read FVVA…LVGL, IHYL…LIFL, LVIM…MIGG, WTGL…VSLI, IYLF…DLFI, and GVLD…GINI.

This sequence belongs to the CDS family.

Its subcellular location is the cell membrane. The enzyme catalyses a 1,2-diacyl-sn-glycero-3-phosphate + CTP + H(+) = a CDP-1,2-diacyl-sn-glycerol + diphosphate. Its pathway is phospholipid metabolism; CDP-diacylglycerol biosynthesis; CDP-diacylglycerol from sn-glycerol 3-phosphate: step 3/3. This Rickettsia typhi (strain ATCC VR-144 / Wilmington) protein is Phosphatidate cytidylyltransferase (cdsA).